The chain runs to 469 residues: Ribulose bisphosphate carboxylase large chain (469 aa).

At lysine 7 the chain carries N6,N6,N6-trimethyllysine. Residues asparagine 116 and threonine 166 each coordinate substrate. Lysine 168 functions as the Proton acceptor in the catalytic mechanism. Lysine 170 provides a ligand contact to substrate. 3 residues coordinate Mg(2+): lysine 194, aspartate 196, and glutamate 197. Lysine 194 carries the N6-carboxylysine modification. Histidine 287 acts as the Proton acceptor in catalysis. The substrate site is built by arginine 288, histidine 320, and serine 372.

It belongs to the RuBisCO large chain family. Type I subfamily. In terms of assembly, heterohexadecamer of 8 large chains and 8 small chains; disulfide-linked. The disulfide link is formed within the large subunit homodimers. Requires Mg(2+) as cofactor. The disulfide bond which can form in the large chain dimeric partners within the hexadecamer appears to be associated with oxidative stress and protein turnover.

It is found in the plastid. It localises to the chloroplast. It catalyses the reaction 2 (2R)-3-phosphoglycerate + 2 H(+) = D-ribulose 1,5-bisphosphate + CO2 + H2O. The catalysed reaction is D-ribulose 1,5-bisphosphate + O2 = 2-phosphoglycolate + (2R)-3-phosphoglycerate + 2 H(+). Functionally, ruBisCO catalyzes two reactions: the carboxylation of D-ribulose 1,5-bisphosphate, the primary event in carbon dioxide fixation, as well as the oxidative fragmentation of the pentose substrate in the photorespiration process. Both reactions occur simultaneously and in competition at the same active site. This is Ribulose bisphosphate carboxylase large chain from Pachira aquatica (Guiana chestnut).